The following is a 236-amino-acid chain: Small ribosomal subunit protein uS2c (236 aa).

This sequence belongs to the universal ribosomal protein uS2 family.

The protein localises to the plastid. It is found in the chloroplast. This Oryza nivara (Indian wild rice) protein is Small ribosomal subunit protein uS2c (rps2).